We begin with the raw amino-acid sequence, 164 residues long: Interleukin-31 (164 aa).

Residues 1 to 23 (MASHSGPSTSVLFLFCCLGGWLA) form the signal peptide. Asn-67 and Asn-100 each carry an N-linked (GlcNAc...) asparagine glycan.

Detected at low levels in testis, bone marrow, skeletal muscle, kidney, colon, thymus, small intestine and trachea.

The protein resides in the secreted. In terms of biological role, activates STAT3 and possibly STAT1 and STAT5 through the IL31 heterodimeric receptor composed of IL31RA and OSMR. May function in skin immunity. Enhances myeloid progenitor cell survival in vitro. Induces RETNLA and serum amyloid A protein expression in macrophages. The polypeptide is Interleukin-31 (IL31) (Homo sapiens (Human)).